We begin with the raw amino-acid sequence, 491 residues long: PE-PGRS family protein PE_PGRS26 (491 aa).

Positions 1–93 (MSNVMVVPGM…VGSYAAAEAA (93 aa)) constitute a PE domain. 2 stretches are compositionally biased toward gly residues: residues 207–221 (NGGTGASGADGGGGL) and 229–238 (GGNGGGGDAG). Disordered regions lie at residues 207–238 (NGGTGASGADGGGGLPPVPASPGGNGGGGDAG), 255–275 (DGGAGGAGDSPNSGANGARGG), and 444–491 (AGGN…GKHG). Gly residues predominate over residues 444–485 (AGGNGGDGGPSQGGGNPGFGGDGGTGGPGGVGVPDGIGGANG).

Belongs to the mycobacterial PE family. PGRS subfamily.

Its subcellular location is the cell surface. This Mycobacterium tuberculosis (strain ATCC 25618 / H37Rv) protein is PE-PGRS family protein PE_PGRS26.